Consider the following 227-residue polypeptide: Cytochrome c oxidase subunit 2 (227 aa).

At 1–14 (MAYPVQLGFQDAAS) the chain is on the mitochondrial intermembrane side. The chain crosses the membrane as a helical span at residues 15-45 (PIMEELLYFHDHTLMIMFLISSLVLYIISLM). The Mitochondrial matrix portion of the chain corresponds to 46 to 59 (LTTELMHTNTMDAQ). A helical transmembrane segment spans residues 60–87 (EVETVWTILPAAILILIALPSLRILYMM). Over 88-227 (DEITTPSLTL…HFEEWLLSML (140 aa)) the chain is Mitochondrial intermembrane. Positions 161, 196, 198, 200, 204, and 207 each coordinate Cu cation. Residue Glu198 coordinates Mg(2+).

Belongs to the cytochrome c oxidase subunit 2 family. Component of the cytochrome c oxidase (complex IV, CIV), a multisubunit enzyme composed of 14 subunits. The complex is composed of a catalytic core of 3 subunits MT-CO1, MT-CO2 and MT-CO3, encoded in the mitochondrial DNA, and 11 supernumerary subunits COX4I, COX5A, COX5B, COX6A, COX6B, COX6C, COX7A, COX7B, COX7C, COX8 and NDUFA4, which are encoded in the nuclear genome. The complex exists as a monomer or a dimer and forms supercomplexes (SCs) in the inner mitochondrial membrane with NADH-ubiquinone oxidoreductase (complex I, CI) and ubiquinol-cytochrome c oxidoreductase (cytochrome b-c1 complex, complex III, CIII), resulting in different assemblies (supercomplex SCI(1)III(2)IV(1) and megacomplex MCI(2)III(2)IV(2)). Found in a complex with TMEM177, COA6, COX18, COX20, SCO1 and SCO2. Interacts with TMEM177 in a COX20-dependent manner. Interacts with COX20. Interacts with COX16. Cu cation serves as cofactor.

It is found in the mitochondrion inner membrane. The catalysed reaction is 4 Fe(II)-[cytochrome c] + O2 + 8 H(+)(in) = 4 Fe(III)-[cytochrome c] + 2 H2O + 4 H(+)(out). Functionally, component of the cytochrome c oxidase, the last enzyme in the mitochondrial electron transport chain which drives oxidative phosphorylation. The respiratory chain contains 3 multisubunit complexes succinate dehydrogenase (complex II, CII), ubiquinol-cytochrome c oxidoreductase (cytochrome b-c1 complex, complex III, CIII) and cytochrome c oxidase (complex IV, CIV), that cooperate to transfer electrons derived from NADH and succinate to molecular oxygen, creating an electrochemical gradient over the inner membrane that drives transmembrane transport and the ATP synthase. Cytochrome c oxidase is the component of the respiratory chain that catalyzes the reduction of oxygen to water. Electrons originating from reduced cytochrome c in the intermembrane space (IMS) are transferred via the dinuclear copper A center (CU(A)) of subunit 2 and heme A of subunit 1 to the active site in subunit 1, a binuclear center (BNC) formed by heme A3 and copper B (CU(B)). The BNC reduces molecular oxygen to 2 water molecules using 4 electrons from cytochrome c in the IMS and 4 protons from the mitochondrial matrix. The protein is Cytochrome c oxidase subunit 2 (MT-CO2) of Lemur catta (Ring-tailed lemur).